Consider the following 143-residue polypeptide: Large-conductance mechanosensitive channel (143 aa).

2 consecutive transmembrane segments (helical) span residues 19-39 (VGVI…ADVI) and 81-101 (GSFL…FLVV).

Belongs to the MscL family. Homopentamer.

The protein localises to the cell inner membrane. Channel that opens in response to stretch forces in the membrane lipid bilayer. May participate in the regulation of osmotic pressure changes within the cell. The sequence is that of Large-conductance mechanosensitive channel from Rhodopseudomonas palustris (strain HaA2).